The primary structure comprises 31 residues: Ice-structuring glycoprotein 3 (31 aa).

10 O-linked (GalNAc...) threonine glycosylation sites follow: Thr3, Thr6, Thr9, Thr12, Thr15, Thr18, Thr21, Thr24, Thr27, and Thr30.

Post-translationally, O-linked glycans consist of Gal-GalNAc disaccharides. The three proteins may differ only in the number of repeating units of -Ala-Ala-Thr-.

The protein resides in the secreted. Functionally, antifreeze proteins lower the blood freezing point. This fish lives in antarctic waters where it experiences water temperatures near -1.9 degrees Celsius. Its blood has a freezing point of about -2.0 degrees Celsius, and 30% of the freezing-point depression is due mainly to the 3 major high molecular weight glycoproteins in the plasma. The sequence is that of Ice-structuring glycoprotein 3 from Pagothenia borchgrevinki (Bald rockcod).